A 68-amino-acid polypeptide reads, in one-letter code: Pleurocidin-like peptide WF4 (68 aa).

The signal sequence occupies residues 1-22; it reads MKFTATFLMMFIFVLMVEPGEC. Residues 48-68 constitute a propeptide that is removed on maturation; that stretch reads GEQQDLDKRAVDEDPNVIVFE.

This sequence belongs to the pleurocidin family.

It localises to the secreted. Its function is as follows. Antimicrobial peptide. This is Pleurocidin-like peptide WF4 (ple4) from Pseudopleuronectes americanus (Winter flounder).